Reading from the N-terminus, the 356-residue chain is Biotin synthase (356 aa).

The disordered stretch occupies residues 1–28 (MTIQANVPTGDETSDEASRQTSNEASSE). Residues 77–302 (EDVEVEGIIS…RTVLRYAGGR (226 aa)) enclose the Radical SAM core domain. The [4Fe-4S] cluster site is built by Cys92, Cys96, and Cys99. [2Fe-2S] cluster contacts are provided by Cys135, Cys168, Cys227, and Arg297.

It belongs to the radical SAM superfamily. Biotin synthase family. Homodimer. [4Fe-4S] cluster is required as a cofactor. The cofactor is [2Fe-2S] cluster.

It catalyses the reaction (4R,5S)-dethiobiotin + (sulfur carrier)-SH + 2 reduced [2Fe-2S]-[ferredoxin] + 2 S-adenosyl-L-methionine = (sulfur carrier)-H + biotin + 2 5'-deoxyadenosine + 2 L-methionine + 2 oxidized [2Fe-2S]-[ferredoxin]. It functions in the pathway cofactor biosynthesis; biotin biosynthesis; biotin from 7,8-diaminononanoate: step 2/2. Functionally, catalyzes the conversion of dethiobiotin (DTB) to biotin by the insertion of a sulfur atom into dethiobiotin via a radical-based mechanism. This is Biotin synthase from Arthrobacter sp. (strain FB24).